The primary structure comprises 344 residues: tRNA(Ile)-lysidine synthase (344 aa).

43–48 provides a ligand contact to ATP; sequence SGGADS.

It belongs to the tRNA(Ile)-lysidine synthase family.

Its subcellular location is the cytoplasm. It catalyses the reaction cytidine(34) in tRNA(Ile2) + L-lysine + ATP = lysidine(34) in tRNA(Ile2) + AMP + diphosphate + H(+). In terms of biological role, ligates lysine onto the cytidine present at position 34 of the AUA codon-specific tRNA(Ile) that contains the anticodon CAU, in an ATP-dependent manner. Cytidine is converted to lysidine, thus changing the amino acid specificity of the tRNA from methionine to isoleucine. This Bordetella parapertussis (strain 12822 / ATCC BAA-587 / NCTC 13253) protein is tRNA(Ile)-lysidine synthase.